A 201-amino-acid polypeptide reads, in one-letter code: Transgelin (201 aa).

Alanine 2 bears the N-acetylalanine mark. A Calponin-homology (CH) domain is found at glutamate 24 to alanine 137. Serine 166 bears the Phosphoserine mark. Residue lysine 172 is modified to N6-acetyllysine. A Calponin-like repeat occupies isoleucine 175–isoleucine 200. At serine 181 the chain carries Phosphoserine. Arginine 183 carries the omega-N-methylarginine modification.

Belongs to the calponin family.

It localises to the cytoplasm. Actin cross-linking/gelling protein. The protein is Transgelin (Tagln) of Mus musculus (Mouse).